The following is a 66-amino-acid chain: uncharacterized protein (66 aa).

Positions 1–20 (MTIINSISNFGSNNSFSNNN) are enriched in low complexity. A disordered region spans residues 1–47 (MTIINSISNFGSNNSFSNNNTVNQKSVIKRSKQMKNDNTSIGSSFKN). Polar residues predominate over residues 36–47 (NDNTSIGSSFKN).

This is an uncharacterized protein from Dictyostelium discoideum (Social amoeba).